A 152-amino-acid chain; its full sequence is Ribosomal RNA large subunit methyltransferase H (152 aa).

S-adenosyl-L-methionine contacts are provided by residues Leu68, Gly100, and 119-124; that span reads FGRMTW.

It belongs to the RNA methyltransferase RlmH family. Homodimer.

It is found in the cytoplasm. It carries out the reaction pseudouridine(1915) in 23S rRNA + S-adenosyl-L-methionine = N(3)-methylpseudouridine(1915) in 23S rRNA + S-adenosyl-L-homocysteine + H(+). In terms of biological role, specifically methylates the pseudouridine at position 1915 (m3Psi1915) in 23S rRNA. The chain is Ribosomal RNA large subunit methyltransferase H from Paramagnetospirillum magneticum (strain ATCC 700264 / AMB-1) (Magnetospirillum magneticum).